Reading from the N-terminus, the 254-residue chain is Fluoride-specific ion channel FluC 1 (254 aa).

3 helical membrane passes run 19–39, 51–71, and 80–100; these read LDILVANVVACFLLGTVTALY, IIGMGMMGGVSTFSSFAYGSV, and AFLIAAAYVTVSVVAGYVAVL. Na(+)-binding residues include G58 and S61.

It belongs to the fluoride channel Fluc/FEX (TC 1.A.43) family.

It is found in the cell inner membrane. The catalysed reaction is fluoride(in) = fluoride(out). Its activity is regulated as follows. Na(+) is not transported, but it plays an essential structural role and its presence is essential for fluoride channel function. Functionally, fluoride-specific ion channel. Important for reducing fluoride concentration in the cell, thus reducing its toxicity. The chain is Fluoride-specific ion channel FluC 1 from Brucella suis biovar 1 (strain 1330).